The chain runs to 2641 residues: MTSQYGTNGASADPEPIAIVGMGCRWPGGVRDASSLWELLKNKRSGYREFGDHRFSRKGFHHPNSEHPGTVATEGGFLLAEDPRLFDHAFFGIGSLEVETMDPSQRKLLEVVYEAFENSGEPWDSFSGSTTGVFVGNFSSDHLIIQGRDTDHPRPYASVGTGTSILSNRVNYIFNLRGPSVTIDTACSSSMYALHLAISAIRNGDCDSAIVAASNTIIDPSTXLMMTKLGVLSPTSTSHTFDSSADGYARGEGFSALYLKRMSTAVDGDYPIRALVRGSALNANGRTGGITHPGREGQEAVIRKAYENAGNLPMKDTTFFECHGTGTPVGDPIEISAIGNVFGSATTPEKPLLVGSIKTNIGHTEPASAIAGIMKVVLALENGFIPPSIGIKKLNPKLDLKGGRINILTENTPWPDGRVRRASVNSFGYGGANGHCIIDDVRTVLPDYKKRTANTSIGHINGHTNGHTNGHTNGHTNGHTNGHTNGHTNGAHASDGHNGHHQNGMNGNSASHMSEKADKVHYPFSYKPTLVKDFNAKPRRRVLIPFSAHNEASLDLNITAISEAIKRENLADVAYTLAAKRSRFMQRTFRIVDSESPANGFAVKEKVLASGTQTARLGFVFTGQGAQWHAMGADLFEYAVFRTSIEYLDSILASLPTPSAWKIEDILAGNCDPNDIHKPEVSQTVCTAVQIGLVDLLYTWNVRPSAAVGHSSGEIAATYAAGRITAAQAIAAAYFRGQAVSKNKSKGLMLAVGLGLDKAEAYISGLDSSVRIAAINSPDSVTLSGDESTIKDVAAKLNEDKVFNRELKTGGNAYHSHHMLALGEFYNSTLSEGLDYVKSLGQAEPSQLYATRPWMSSVYPSKSTENPPVSPSYWRANLESPVRFSEALANMLNLPDPIDVLVEIGPHPALKGPVGQISRSVDKSLPYFPTLNRGTNGGISLLQLAGSLFSLNAEVDLTAVNAVDVISANQLKLVHGTTATNLPPYQYAYGPVIYHESRFSKEFRGRDIVRHDLLGSKLPGNAKLRPQWRNILRLKDLPWLNDHKLLPYPVFPAAGYIATVIEAASRIYNEQSEPLDITGYKLRNVTFSSAMRLPDDDFGLEIITSLELADAANPKAPTWATFSISSVAREAGTWTEHCSGRVRVIAGTSVANEKMSTEMDARTLDTKAWYKKFAEIGLGYGPTFQPLSNIRADPSKGLAVAQLALHTTRDTVEGGESNYPLHPASLDAVFQLSLVASHGGQIDRVCNAFVPVHIDQLYVRNGVSQDSAVAIALGSMKGLRSAHAKLQVLDKSEQVVLDVGNLRCVTYTEVLPSTGADKEAFSIPFLRLSWKPDIRAMDNEQVQRRFPPPTENVEKAYLFDKLERLGTLYVAEIHERYAGQGQFSSAPAHIDNFLSWVRRRMKDDNKWVAEANSLTSSQRGILIKELFAEVGHISDVKIANKVFNNMEDILNERKTGLEVVIPDNLLHGMYEDGLIMTGAYPQLVRFFDLFGYANPNMRILEIGAGTGGATRKILKTLIGPHGIKRYQDYTFTDISSGFLAQAREAFADFQDMKYSVLDIQENPLEHGYEAVYDVVVACECLHATPSIVKTLTNCRKLVKPGGRLVVVENTRAVIGHGLVLGHLSGYWDGIPDGRVESPFLHLEGWNASLNQTGFAGAELVLDDYPAPYTTARTIVSSAVEEPAKVGQSPNGTVHLVHGDNRPELLSRIEHELTERGTEFKVISIGDVETHLPDNSRTVAFADSKSLLVNASENDLKSFKALIRKSANLVWVTFGGIVHGHDPDASITTGLLRTLGTENPASQFLSIDVSPDSDFQEIRLTRTILDQELALSDRIAGESRDYEFVWQEDCLWVSRLVPDVALQDKLELSESRPSRAEMLPLDSQGSVQAAFETPGLLTSLYFKPYEETWKSLPDDWIQVKVAAVGLNWKDLLTSAGRFDMNTFSSEYSGVVAQVGLNVTNVAVGDRVYGYGRGHFGNYVRAPANFAYRMLPGEDFVKMATIPLVGMTAIYSFECVTQLKDQERLLIQSATGGLGLSAIQLAKAKGAEIFATAGTQEKRRYLIDVVGIPASHVFSSRDPADFAKLMEATDGKGFNVILSTSSGELLYDSIKMLAPMGRIIDVGRIDVQNSTSLALELFKRNATFTSFDLAVADDADRALGPALMKAVNKRVRAGQMGPLSSITTYDVSQLDQALMAFSKGTHVGKLVVTFQNPDALVKMVPAAPHAQFARNANYLITGGLGGLGRSIVNFMAERGARHFTVLSRSRKINSEGQMLIDKLATSGTVVECVSCDVSDSKDVARAVQDAAVVRPIKGIVHAAVSYQDLSFDKLAIEQWTSALAAKVQGTKNLHEATKTHALDFFLMTTTIESFVALATQSAYTAANNFQDYFARWRRQQGLPASTVSFGLIRDVGHLSTNSTTLALMARNKVMDISEYNFLRLLEPAFLNNESALDPAASKEPYTGAVDDPLSVTNVVTCFDPATMATRKREEAAENNGNTGNSPRWYTDARVSLIMRAFDDAERYQASAGGGGDGGNERGNNAGVASLRSEFGEAVKAGPAERSRTVALVTDAIVKTVAQMLFVDASGVDASRTVADYGVDSLIAAELRNWFNVAFGADVSMLEMLDTATSMKILANKIVDGALA.

Residues 14 to 440 form the Ketosynthase family 3 (KS3) domain; it reads PEPIAIVGMG…GANGHCIIDD (427 aa). Active-site for beta-ketoacyl synthase activity residues include Cys187, His323, and His363. The interval 456–515 is disordered; that stretch reads SIGHINGHTNGHTNGHTNGHTNGHTNGHTNGHTNGAHASDGHNGHHQNGMNGNSASHMSE. The span at 461–490 shows a compositional bias: low complexity; that stretch reads NGHTNGHTNGHTNGHTNGHTNGHTNGHTNG. A malonyl-CoA:ACP transacylase (MAT) region spans residues 619–920; the sequence is FVFTGQGAQW…KGPVGQISRS (302 aa). The segment at 1011-1149 is N-terminal hotdog fold; it reads HDLLGSKLPG…GRVRVIAGTS (139 aa). The dehydratase (DH) domain stretch occupies residues 1011 to 1309; it reads HDLLGSKLPG…GNLRCVTYTE (299 aa). Positions 1011 to 1313 constitute a PKS/mFAS DH domain; sequence HDLLGSKLPG…CVTYTEVLPS (303 aa). His1043 acts as the Proton acceptor; for dehydratase activity in catalysis. Residues 1161–1313 are C-terminal hotdog fold; that stretch reads ARTLDTKAWY…CVTYTEVLPS (153 aa). The active-site Proton donor; for dehydratase activity is the Asp1227. The segment at 1477-1665 is methyltransferase (MT) domain; the sequence is TGAYPQLVRF…GAELVLDDYP (189 aa). The tract at residues 1894-2206 is enoyl reductase (ER) domain; that stretch reads GLLTSLYFKP…KGTHVGKLVV (313 aa). Residues 2231 to 2408 form a ketoreductase (KR) domain region; sequence NYLITGGLGG…STVSFGLIRD (178 aa). Residues 2561 to 2639 form the Carrier domain; sequence RTVALVTDAI…ILANKIVDGA (79 aa). Ser2598 is subject to O-(pantetheine 4'-phosphoryl)serine.

It functions in the pathway phytotoxin biosynthesis. Prosolanapyrone synthase; part of the gene cluster that mediates the biosynthesis of the phytotoxin solanapyrone, a causal agent of early blight disease of potato and tomato. The prosolanapyrone synthase sol1 is a polyketide synthase that produces the octaketide desmethylprosolanapyrone I via sequential condensations of 7 malonyl-CoA units with one acetyl-CoA unit, and one methylation step. The octaketide backbone is further methylated by the sol2 O-methyltransferase to yield prosolanapyrone I. Prosolanapyrone I is hydroxylated to prosolanapyrone II by the cytochrome P450 monooxygenase sol6. The solanapyrone synthase sol5 then catalyzes the oxidation of prosolanapyrone II and the subsequent Diels Alder cycloisomerization of the product prosolanapyrone III to solanapyrones A and D. Solanapyrones A and D are then converted into solanapyrones B and E, respectively, by the sol3 dehydrogenase. This chain is Prosolanapyrone synthase (sol1), found in Alternaria solani.